Reading from the N-terminus, the 215-residue chain is Probable transaldolase (215 aa).

The active-site Schiff-base intermediate with substrate is the Lys-83.

This sequence belongs to the transaldolase family. Type 3B subfamily.

The protein resides in the cytoplasm. The enzyme catalyses D-sedoheptulose 7-phosphate + D-glyceraldehyde 3-phosphate = D-erythrose 4-phosphate + beta-D-fructose 6-phosphate. The protein operates within carbohydrate degradation; pentose phosphate pathway; D-glyceraldehyde 3-phosphate and beta-D-fructose 6-phosphate from D-ribose 5-phosphate and D-xylulose 5-phosphate (non-oxidative stage): step 2/3. Functionally, transaldolase is important for the balance of metabolites in the pentose-phosphate pathway. The polypeptide is Probable transaldolase (Pelotomaculum thermopropionicum (strain DSM 13744 / JCM 10971 / SI)).